We begin with the raw amino-acid sequence, 243 residues long: Ribosomal RNA small subunit methyltransferase J (243 aa).

Residues Glu112–Arg113 and Asp164 contribute to the S-adenosyl-L-methionine site.

Belongs to the methyltransferase superfamily. RsmJ family.

The protein localises to the cytoplasm. The catalysed reaction is guanosine(1516) in 16S rRNA + S-adenosyl-L-methionine = N(2)-methylguanosine(1516) in 16S rRNA + S-adenosyl-L-homocysteine + H(+). Specifically methylates the guanosine in position 1516 of 16S rRNA. The protein is Ribosomal RNA small subunit methyltransferase J of Legionella pneumophila (strain Corby).